The sequence spans 181 residues: MARLQKHYRDTVINQLRERLGCQSVMAVPRIEKITLNIGAGEAVGDKKILERVMGDMARISGQKPVLTRARKSVAGFKIREDWPIGCKVTLRRKQMYEFLDRLINIAIPRIRDFRGLSPKSFDGRGNYNMGIREQIIFPEIDYDQIDAIRGMNITITTTAKTDEEGQALLRAFNFPFRTHT.

Belongs to the universal ribosomal protein uL5 family. In terms of assembly, part of the 50S ribosomal subunit; part of the 5S rRNA/L5/L18/L25 subcomplex. Contacts the 5S rRNA and the P site tRNA. Forms a bridge to the 30S subunit in the 70S ribosome.

Its function is as follows. This is one of the proteins that bind and probably mediate the attachment of the 5S RNA into the large ribosomal subunit, where it forms part of the central protuberance. In the 70S ribosome it contacts protein S13 of the 30S subunit (bridge B1b), connecting the 2 subunits; this bridge is implicated in subunit movement. Contacts the P site tRNA; the 5S rRNA and some of its associated proteins might help stabilize positioning of ribosome-bound tRNAs. This is Large ribosomal subunit protein uL5 from Nitrosococcus oceani (strain ATCC 19707 / BCRC 17464 / JCM 30415 / NCIMB 11848 / C-107).